The following is a 113-amino-acid chain: Large ribosomal subunit protein bL20c (113 aa).

It belongs to the bacterial ribosomal protein bL20 family.

The protein localises to the plastid. The protein resides in the chloroplast. Binds directly to 23S ribosomal RNA and is necessary for the in vitro assembly process of the 50S ribosomal subunit. It is not involved in the protein synthesizing functions of that subunit. This is Large ribosomal subunit protein bL20c from Staurastrum punctulatum (Green alga).